We begin with the raw amino-acid sequence, 616 residues long: MPKYRSATTTHGRNMAGARALWRATGMTDADFGKPIIAVVNSFTQFVPGHVHLRDLGKLVAEQIEAAGGVAKEFNTIAVDDGIAMGHGGMLYSLPSRELIADSVEYMVNAHCADAMVCISNCDKITPGMLMASLRLNIPVIFVSGGPMEAGKTKLSDRIIKLDLVDAMIQGADPKVSDSQSDQVERSACPTCGSCSGMFTANSMNCLTEALGLSQPGNGSLLATHADRKQLFLNAGKRIVELTKRYYEQNDESALPRNIASKAAFENAMTLDIAMGGSTNTVLHLLAAAQEAEIDFTMSDIDKLSRKVPQLCKVAPSTQKYHMEDVHRAGGVIGILGELDRAGLLNRDVKNVLGLTLPQTLEQYDVMLTQDDAVKNMFRAGPAGIRTTQAFSQDCRWDSLDDDRANGCIRSLEHAYSKDGGLAVLYGNFAENGCIVKTAGVDDSILKFTGPAKVYESQDDAVEAILGGKVVAGDVVVIRYEGPKGGPGMQEMLYPTSFLKSMGLGKACALITDGRFSGGTSGLSIGHVSPEAASGGSIGLIEDGDLIAIDIPNRGIQLQVSDAELAARREAQEARGDKAWTPKNRERQVSFALRAYASLATSADKGAVRDKSKLGG.

Asp81 lines the Mg(2+) pocket. Cys122 contributes to the [2Fe-2S] cluster binding site. Positions 123 and 124 each coordinate Mg(2+). An N6-carboxylysine modification is found at Lys124. [2Fe-2S] cluster is bound at residue Cys195. Residue Glu491 coordinates Mg(2+). The active-site Proton acceptor is the Ser517.

Belongs to the IlvD/Edd family. In terms of assembly, homodimer. It depends on [2Fe-2S] cluster as a cofactor. Mg(2+) is required as a cofactor.

It carries out the reaction (2R)-2,3-dihydroxy-3-methylbutanoate = 3-methyl-2-oxobutanoate + H2O. The enzyme catalyses (2R,3R)-2,3-dihydroxy-3-methylpentanoate = (S)-3-methyl-2-oxopentanoate + H2O. It participates in amino-acid biosynthesis; L-isoleucine biosynthesis; L-isoleucine from 2-oxobutanoate: step 3/4. It functions in the pathway amino-acid biosynthesis; L-valine biosynthesis; L-valine from pyruvate: step 3/4. Functionally, functions in the biosynthesis of branched-chain amino acids. Catalyzes the dehydration of (2R,3R)-2,3-dihydroxy-3-methylpentanoate (2,3-dihydroxy-3-methylvalerate) into 2-oxo-3-methylpentanoate (2-oxo-3-methylvalerate) and of (2R)-2,3-dihydroxy-3-methylbutanoate (2,3-dihydroxyisovalerate) into 2-oxo-3-methylbutanoate (2-oxoisovalerate), the penultimate precursor to L-isoleucine and L-valine, respectively. In Escherichia coli O9:H4 (strain HS), this protein is Dihydroxy-acid dehydratase.